The sequence spans 321 residues: Beta-1,3-N-acetylglucosaminyltransferase manic fringe (321 aa).

Topologically, residues 1 to 7 (MQCRLPR) are cytoplasmic. A helical; Signal-anchor for type II membrane protein transmembrane segment spans residues 8–27 (GLAGALLTLLCMGLLCLRYH). Topologically, residues 28 to 321 (LNLSPQRVQE…TPWCPQLGAR (294 aa)) are lumenal. Residue Arg70 participates in substrate binding. A glycan (N-linked (GlcNAc...) asparagine) is linked at Asn109. 2 disulfides stabilise this stretch: Cys110-Cys121 and Cys139-Cys202. Asp143 serves as a coordination point for substrate. Position 144 (Asp144) interacts with Mn(2+). Residue Asn185 is glycosylated (N-linked (GlcNAc...) asparagine). Asp232 is a catalytic residue. Residue His256 participates in Mn(2+) binding. Cys306 and Cys315 are joined by a disulfide.

The protein belongs to the glycosyltransferase 31 family. Requires Mn(2+) as cofactor.

Its subcellular location is the golgi apparatus membrane. It carries out the reaction 3-O-(alpha-L-fucosyl)-L-threonyl-[EGF-like domain protein] + UDP-N-acetyl-alpha-D-glucosamine = 3-O-(N-acetyl-beta-D-glucosaminyl-(1-&gt;3)-alpha-L-fucosyl)-L-threonyl-[EGF-like domain protein] + UDP + H(+). The catalysed reaction is 3-O-(alpha-L-fucosyl)-L-seryl-[EGF-like domain protein] + UDP-N-acetyl-alpha-D-glucosamine = 3-O-(N-acetyl-beta-D-glucosaminyl-(1-&gt;3)-alpha-L-fucosyl)-L-seryl-[EGF-like domain protein] + UDP + H(+). Functionally, glycosyltransferase that initiates the elongation of O-linked fucose residues attached to EGF-like repeats in the extracellular domain of Notch molecules. Modulates NOTCH1 activity by modifying O-fucose residues at specific EGF-like domains resulting in inhibition of NOTCH1 activation by JAG1 and enhancement of NOTCH1 activation by DLL1 via an increase in its binding to DLL1. This chain is Beta-1,3-N-acetylglucosaminyltransferase manic fringe (MFNG), found in Pan troglodytes (Chimpanzee).